We begin with the raw amino-acid sequence, 588 residues long: Polyamine deacetylase HDAC10 (588 aa).

The tract at residues 1–302 (MGTALVYHED…AGGRICAVLE (302 aa)) is histone deacetylase. His135 is an active-site residue.

This sequence belongs to the histone deacetylase family. HD type 2 subfamily. As to quaternary structure, interacts with HDAC3. Interacts with HDAC2 and NCOR2/SMRT. Interacts with HSPA8/HSC70. Interacts with MSH2.

It localises to the cytoplasm. Its subcellular location is the nucleus. It catalyses the reaction N(8)-acetylspermidine + H2O = spermidine + acetate. It carries out the reaction N-acetylputrescine + H2O = putrescine + acetate. The enzyme catalyses N-acetylcadaverine + H2O = cadaverine + acetate. The catalysed reaction is N(6)-acetyl-L-lysyl-[protein] + H2O = L-lysyl-[protein] + acetate. Functionally, polyamine deacetylase (PDAC), which acts preferentially on N(8)-acetylspermidine, and also on acetylcadaverine and acetylputrescine. Exhibits attenuated catalytic activity toward N(1),N(8)-diacetylspermidine and very low activity, if any, toward N(1)-acetylspermidine. Histone deacetylase activity has been observed in vitro. Has also been shown to be involved in MSH2 deacetylation. The physiological relevance of protein/histone deacetylase activity is unclear and could be very weak. May play a role in the promotion of late stages of autophagy, possibly autophagosome-lysosome fusion and/or lysosomal exocytosis in neuroblastoma cells. May play a role in homologous recombination. May promote DNA mismatch repair. This is Polyamine deacetylase HDAC10 (Hdac10) from Rattus norvegicus (Rat).